Consider the following 197-residue polypeptide: MRSAAIKRKTKETDIEVSVNLDGTGVVEIATGIGFFDHMLDLLARHSRIDMTVKAVGDLHIDFHHTTEDVGIALGQAVKQALGDMAGITRYASIHMPMDETLTRVVIDVSGRPMLVFRTAFSRDKIGEFDTELVREWFNAFAMNAGITLHVETLYGENAHHIAESCFKGLARALRAALAIDPRNKGEVPSTKGQLGG.

The protein belongs to the imidazoleglycerol-phosphate dehydratase family.

Its subcellular location is the cytoplasm. It carries out the reaction D-erythro-1-(imidazol-4-yl)glycerol 3-phosphate = 3-(imidazol-4-yl)-2-oxopropyl phosphate + H2O. It participates in amino-acid biosynthesis; L-histidine biosynthesis; L-histidine from 5-phospho-alpha-D-ribose 1-diphosphate: step 6/9. The chain is Imidazoleglycerol-phosphate dehydratase from Bradyrhizobium sp. (strain ORS 278).